Consider the following 225-residue polypeptide: LexA repressor (225 aa).

The H-T-H motif DNA-binding region spans 26-46 (YEEMKDSLNLKSKSGIHRLIS). Catalysis depends on for autocatalytic cleavage activity residues Ser146 and Lys184.

Belongs to the peptidase S24 family. In terms of assembly, homodimer.

The catalysed reaction is Hydrolysis of Ala-|-Gly bond in repressor LexA.. In terms of biological role, represses a number of genes involved in the response to DNA damage (SOS response), including recA and lexA. In the presence of single-stranded DNA, RecA interacts with LexA causing an autocatalytic cleavage which disrupts the DNA-binding part of LexA, leading to derepression of the SOS regulon and eventually DNA repair. This is LexA repressor from Pelagibacter ubique (strain HTCC1062).